Here is a 50-residue protein sequence, read N- to C-terminus: Small integral membrane protein 46 (50 aa).

A helical transmembrane segment spans residues 15-37 (TTFQLWLQLLLWAHLAVRFLGYL).

The protein localises to the membrane. This is Small integral membrane protein 46 from Homo sapiens (Human).